The primary structure comprises 59 residues: Large ribosomal subunit protein uL30 (59 aa).

This sequence belongs to the universal ribosomal protein uL30 family. As to quaternary structure, part of the 50S ribosomal subunit.

The protein is Large ribosomal subunit protein uL30 of Psychrobacter sp. (strain PRwf-1).